The sequence spans 434 residues: Salicylate hydroxylase (434 aa).

Residue R9 to E38 participates in FAD binding.

In terms of assembly, monomer. Requires FAD as cofactor.

The enzyme catalyses salicylate + NADH + O2 + 2 H(+) = catechol + CO2 + NAD(+) + H2O. Its pathway is aromatic compound metabolism; naphthalene degradation. This is Salicylate hydroxylase (nahG) from Pseudomonas putida (Arthrobacter siderocapsulatus).